A 154-amino-acid polypeptide reads, in one-letter code: uncharacterized protein (154 aa).

Residues 1–143 (MTESERALLT…LRKLAGSLTK (143 aa)) form the HTH marR-type domain. Positions 57–80 (LSKLAMSLDLKPASVTRMTDILYK) form a DNA-binding region, H-T-H motif.

This is an uncharacterized protein from Bacillus subtilis (strain 168).